Consider the following 859-residue polypeptide: Valine--tRNA ligase (859 aa).

Residues 46–56 (PTVSGQLHIGH) carry the 'HIGH' region motif. A 'KMSKS' region motif is present at residues 583-587 (KMSKS). Lysine 586 lines the ATP pocket.

This sequence belongs to the class-I aminoacyl-tRNA synthetase family. ValS type 2 subfamily. In terms of assembly, monomer.

It localises to the cytoplasm. The enzyme catalyses tRNA(Val) + L-valine + ATP = L-valyl-tRNA(Val) + AMP + diphosphate. In terms of biological role, catalyzes the attachment of valine to tRNA(Val). As ValRS can inadvertently accommodate and process structurally similar amino acids such as threonine, to avoid such errors, it has a 'posttransfer' editing activity that hydrolyzes mischarged Thr-tRNA(Val) in a tRNA-dependent manner. The sequence is that of Valine--tRNA ligase from Rickettsia felis (strain ATCC VR-1525 / URRWXCal2) (Rickettsia azadi).